Consider the following 75-residue polypeptide: Putative UPF0377 protein YJL222W-A (75 aa).

Belongs to the UPF0377 family.

The polypeptide is Putative UPF0377 protein YJL222W-A (Saccharomyces cerevisiae (strain ATCC 204508 / S288c) (Baker's yeast)).